We begin with the raw amino-acid sequence, 267 residues long: MVKTQTYTERASAHPSPVAQRLFKLMDNKKTNLCASVDVKSTEEFLTLIEKLGPYICLVKTHIDIIDDFSYEGTVVPLLALAKKHNFMIFEDRKFADIGNTVKSQYSGGVYKIAQWSDITNAHGITGSGIVKGLKEAAQESSKEPRGLLMLAELSSKGSLAYGEYTEKTIEIAKSDKEFVIGFIAQRDMGGTDEGFDWIVMTPGVGLDDKGDGLGQQYRTVDQVVTTGTDIIIVGRGLFGQGRDPTVEGKRYRDAGWNAYLKKTGSL.

Substrate contacts are provided by residues D38, 60-62 (KTH), 92-101 (DRKFADIGNT), Y218, and R236. K94 serves as the catalytic Proton donor.

It belongs to the OMP decarboxylase family.

The catalysed reaction is orotidine 5'-phosphate + H(+) = UMP + CO2. Its pathway is pyrimidine metabolism; UMP biosynthesis via de novo pathway; UMP from orotate: step 2/2. In Debaryomyces hansenii (strain ATCC 36239 / CBS 767 / BCRC 21394 / JCM 1990 / NBRC 0083 / IGC 2968) (Yeast), this protein is Orotidine 5'-phosphate decarboxylase (URA3).